Here is a 607-residue protein sequence, read N- to C-terminus: UPF0329 protein ECU06_1610 (607 aa).

2 disordered regions span residues 312-410 (VHEV…RSKG) and 531-570 (TSSE…PPGV). Residues 313 to 347 (HEVKERESEEKRREEESLRNAEELLRMEEREKGEG) are compositionally biased toward basic and acidic residues. A compositionally biased stretch (basic residues) spans 353 to 364 (KGKKKRGKKGAG). A compositionally biased stretch (basic and acidic residues) spans 365–374 (KAKEESKEED). Positions 375–393 (RGEEEEESVEAEVPVEEMA) are enriched in acidic residues. The segment covering 531-543 (TSSEKTGKGSSPS) has biased composition (polar residues). The segment covering 549-558 (DVDEIEEDGS) has biased composition (acidic residues).

The protein belongs to the UPF0329 family.

The protein is UPF0329 protein ECU06_1610 of Encephalitozoon cuniculi (strain GB-M1) (Microsporidian parasite).